A 152-amino-acid chain; its full sequence is Deoxyuridine 5'-triphosphate nucleotidohydrolase (152 aa).

Substrate is bound by residues 71-73, asparagine 84, 88-90, and methionine 98; these read RSG and LID.

It belongs to the dUTPase family. Requires Mg(2+) as cofactor.

The enzyme catalyses dUTP + H2O = dUMP + diphosphate + H(+). Its pathway is pyrimidine metabolism; dUMP biosynthesis; dUMP from dCTP (dUTP route): step 2/2. Functionally, this enzyme is involved in nucleotide metabolism: it produces dUMP, the immediate precursor of thymidine nucleotides and it decreases the intracellular concentration of dUTP so that uracil cannot be incorporated into DNA. The protein is Deoxyuridine 5'-triphosphate nucleotidohydrolase of Hahella chejuensis (strain KCTC 2396).